A 488-amino-acid polypeptide reads, in one-letter code: E3 ubiquitin-protein ligase TRIM39 (488 aa).

The RING-type zinc-finger motif lies at cysteine 29–arginine 70. The B box-type zinc-finger motif lies at arginine 102 to methionine 143. Cysteine 107, histidine 110, cysteine 129, and histidine 135 together coordinate Zn(2+). Residues glutamate 181 to lysine 250 are a coiled coil. 2 interaction with CDKN1A regions span residues lysine 268 to alanine 307 and threonine 359 to glutamate 488. Positions serine 289–proline 484 constitute a B30.2/SPRY domain.

The protein belongs to the TRIM/RBCC family. As to quaternary structure, interacts with MOAP1. Interacts with CDKN1A. Post-translationally, autoubiquitinated.

It localises to the cytoplasm. It is found in the cytosol. The protein resides in the mitochondrion. The protein localises to the nucleus. It carries out the reaction S-ubiquitinyl-[E2 ubiquitin-conjugating enzyme]-L-cysteine + [acceptor protein]-L-lysine = [E2 ubiquitin-conjugating enzyme]-L-cysteine + N(6)-ubiquitinyl-[acceptor protein]-L-lysine.. The protein operates within protein modification; protein ubiquitination. E3 ubiquitin-protein ligase. May facilitate apoptosis by inhibiting APC/C-Cdh1-mediated poly-ubiquitination and subsequent proteasome-mediated degradation of the pro-apoptotic protein MOAP1. Regulates the G1/S transition of the cell cycle and DNA damage-induced G2 arrest by stabilizing CDKN1A/p21. Positively regulates CDKN1A/p21 stability by competing with DTL for CDKN1A/p21 binding, therefore disrupting DCX(DTL) E3 ubiquitin ligase complex-mediated CDKN1A/p21 ubiquitination and degradation. The polypeptide is E3 ubiquitin-protein ligase TRIM39 (Trim39) (Mus musculus (Mouse)).